We begin with the raw amino-acid sequence, 476 residues long: MNFETVIGLEVHVELKTQSKIFSSSPTPFGAAANTQTSVIDLGYPGVLPVLNKEAVNFAMKAAMALNCEIATDTKFDRKNYFYPDNPKAYQISQFDKPIGENGWIEIEVEGKTKRIGITRLHLEEDAGKLTHTGDGYSLVDFNRQGTPLVEIVSEPDIRTPEEAYAYLEKLKSIIQYTGVSDCKMEEGSLRCDANISLRPIGREEFGTKTELKNLNSFAFVQKGLEFEEKRQEQVLLSGGLIEQETRRYDEASKKTILMRVKEGSDDYRYFPEPDLVELYIDDEWKERVRASIPELPDERRKRYIDDLGLPAYDAMVLTLTKEMSDFFEATITEGAEAKQASNWLMGEVSAYLNSAQKELEDTKLTPQGLAGMIKLIEKGTISSKIAKKVFKELIENGGDAETIVKEKGLVQISDEGALLKLVTEALDNNPQSIEDFRNGKDRAIGFLVGQIMKASKGQANPPMVNKILLEEIKKR.

It belongs to the GatB/GatE family. GatB subfamily. As to quaternary structure, heterotrimer of A, B and C subunits.

It catalyses the reaction L-glutamyl-tRNA(Gln) + L-glutamine + ATP + H2O = L-glutaminyl-tRNA(Gln) + L-glutamate + ADP + phosphate + H(+). The enzyme catalyses L-aspartyl-tRNA(Asn) + L-glutamine + ATP + H2O = L-asparaginyl-tRNA(Asn) + L-glutamate + ADP + phosphate + 2 H(+). Allows the formation of correctly charged Asn-tRNA(Asn) or Gln-tRNA(Gln) through the transamidation of misacylated Asp-tRNA(Asn) or Glu-tRNA(Gln) in organisms which lack either or both of asparaginyl-tRNA or glutaminyl-tRNA synthetases. The reaction takes place in the presence of glutamine and ATP through an activated phospho-Asp-tRNA(Asn) or phospho-Glu-tRNA(Gln). The chain is Aspartyl/glutamyl-tRNA(Asn/Gln) amidotransferase subunit B from Bacillus pumilus (strain SAFR-032).